The chain runs to 204 residues: ATP phosphoribosyltransferase (204 aa).

The protein belongs to the ATP phosphoribosyltransferase family. Short subfamily. Heteromultimer composed of HisG and HisZ subunits.

The protein localises to the cytoplasm. It catalyses the reaction 1-(5-phospho-beta-D-ribosyl)-ATP + diphosphate = 5-phospho-alpha-D-ribose 1-diphosphate + ATP. It functions in the pathway amino-acid biosynthesis; L-histidine biosynthesis; L-histidine from 5-phospho-alpha-D-ribose 1-diphosphate: step 1/9. Its function is as follows. Catalyzes the condensation of ATP and 5-phosphoribose 1-diphosphate to form N'-(5'-phosphoribosyl)-ATP (PR-ATP). Has a crucial role in the pathway because the rate of histidine biosynthesis seems to be controlled primarily by regulation of HisG enzymatic activity. This is ATP phosphoribosyltransferase from Hydrogenobaculum sp. (strain Y04AAS1).